A 27-amino-acid chain; its full sequence is Protamine-B (27 aa).

The disordered stretch occupies residues 1–27; that stretch reads ARRRRRSSRPQRRRRRRRHGRRRRGRR.

Testis.

The protein resides in the nucleus. The protein localises to the chromosome. In terms of biological role, protamines substitute for histones in the chromatin of sperm during the haploid phase of spermatogenesis. They compact sperm DNA into a highly condensed, stable and inactive complex. The chain is Protamine-B from Acipenser stellatus (Sevruga).